A 1111-amino-acid polypeptide reads, in one-letter code: Receptor-type guanylate cyclase gcy-14 (1111 aa).

The N-terminal stretch at 1–14 is a signal peptide; the sequence is MCLFLLLFPYLASG. Residues 15-473 lie on the Extracellular side of the membrane; that stretch reads QFLQTVKVGL…ECPPDFVKEY (459 aa). Asn65, Asn130, Asn318, Asn340, Asn365, and Asn379 each carry an N-linked (GlcNAc...) asparagine glycan. Residues 474–494 form a helical membrane-spanning segment; it reads LVYTIIAAVIVVLALLAGCAG. In terms of domain architecture, Protein kinase spans 482–817; it reads VIVVLALLAG…KSNLMDHVFN (336 aa). Residues 488-496 and Lys545 contribute to the ATP site; that span reads LLAGCAGLL. Residues 495–1111 are Cytoplasmic-facing; it reads LLYTMQMKRK…DFNNGNECVS (617 aa). One can recognise a Guanylate cyclase domain in the interval 875 to 1005; that stretch reads TIFFSDVVQF…DAVNTASRME (131 aa). The interval 1061–1082 is disordered; that stretch reads SAQAPREKTPEPPRRQSVRSIS. Over residues 1065-1074 the composition is skewed to basic and acidic residues; the sequence is PREKTPEPPR.

Belongs to the adenylyl cyclase class-4/guanylyl cyclase family. As to quaternary structure, homodimer. In terms of tissue distribution, expressed asymmetrically in ASEL sensory neuron.

Its subcellular location is the cell membrane. The protein localises to the cell projection. It localises to the cilium. It carries out the reaction GTP = 3',5'-cyclic GMP + diphosphate. Its function is as follows. Guanylate cyclase involved in the production of the second messenger cGMP. Regulates chemotaxis responses toward Na(1+) and Li(1+) salt ions and alkaline pH in ASE left (ASEL) sensory neuron. Directly senses environmental alkalinity in ASEL neuron which probably leads to the activation of cGMP-gated cation channel tax2/tax4. This Caenorhabditis elegans protein is Receptor-type guanylate cyclase gcy-14.